The primary structure comprises 712 residues: Follistatin-like domain-containing protein DDB_G0289517 (712 aa).

Positions 1–21 are cleaved as a signal peptide; the sequence is MKIQTIIQIVLISFLFLNVES. Asn102 carries N-linked (GlcNAc...) asparagine glycosylation. Residues 181–400 are disordered; the sequence is DIYNHLNPDS…SSSPVHQDPC (220 aa). Residues 192–203 show a composition bias toward basic and acidic residues; that stretch reads QFKDKPNHENHK. A compositionally biased stretch (basic residues) spans 204-214; it reads KDKNNKKHKKD. N-linked (GlcNAc...) asparagine glycosylation is found at Asn217 and Asn234. Low complexity predominate over residues 220-251; sequence DKNNNNNNNNNNKKNKTINNNEPNQNQQSNPI. Over residues 254–269 the composition is skewed to polar residues; sequence TFNNETPFPWNFKNQD. Over residues 270 to 281 the composition is skewed to low complexity; it reads QQQQKQEQTQKQ. Positions 301 to 321 are enriched in polar residues; it reads KEPTTHLNTIEPTSFTASASR. A compositionally biased stretch (acidic residues) spans 330 to 339; sequence KDEENIDENN. Residues 352 to 364 are compositionally biased toward basic and acidic residues; it reads DDKSKKPKDDEKH. N-linked (GlcNAc...) asparagine glycosylation occurs at Asn369. Residues 374–384 are compositionally biased toward acidic residues; that stretch reads PADDPSIEITE. Positions 386-395 are enriched in polar residues; the sequence is PTITPSSSPV. Follistatin-like domains lie at 399 to 421 and 471 to 494; these read PCKKATCPNGSHCLVYGNQAYCK and TCSTIKCEDDEVCINKVGLNPYCQ. Asn407 carries N-linked (GlcNAc...) asparagine glycosylation. N-linked (GlcNAc...) asparagine glycosylation is found at Asn505, Asn524, and Asn566. The 23-residue stretch at 596-618 folds into the Follistatin-like 3 domain; it reads SCETLLCEGVNSYCVENGGPICK. An N-linked (GlcNAc...) asparagine glycan is attached at Asn622. Follistatin-like domains follow at residues 660–682 and 687–710; these read SCSVIQCPDNQYCVNTDKGPKCY and ECSNSRCPRDYTCKRDEIRGGACL.

The protein localises to the secreted. The polypeptide is Follistatin-like domain-containing protein DDB_G0289517 (Dictyostelium discoideum (Social amoeba)).